Here is a 720-residue protein sequence, read N- to C-terminus: Mitogen-activated protein kinase 6 (720 aa).

Residue Met1 forms a Peptide (Met-Gly) (interchain with G-Cter in ubiquitin) linkage. One can recognise a Protein kinase domain in the interval 20 to 316 (YMDLKPLGCG…AEEALSHPYM (297 aa)). ATP is bound by residues 26-34 (LGCGGNGLV) and Lys49. Asp152 (proton acceptor) is an active-site residue. Ser189 carries the post-translational modification Phosphoserine; by PAK1, PAK2 and PAK3. An SEG motif motif is present at residues 189–191 (SEG). Positions 332–337 (FHIEDE) match the FRIEDE motif motif. Ser386, Ser452, Ser554, and Ser556 each carry phosphoserine. Residues 638-657 (SEMLETEPVEEGKRGERGRE) are disordered. Basic and acidic residues predominate over residues 647–657 (EEGKRGERGRE). Ser683 carries the post-translational modification Phosphoserine. Residues 698–714 (PSAMKSSPQIPHKTYSN) show a composition bias toward polar residues. The tract at residues 698-720 (PSAMKSSPQIPHKTYSNILKHLN) is disordered.

The protein belongs to the protein kinase superfamily. CMGC Ser/Thr protein kinase family. MAP kinase subfamily. In terms of assembly, heterodimer with ERK4/MAPK4. Interacts with (via FRIEDE motif) MAPKAPK5. Interacts with UBE3A; this interaction may be indirect and mediated by HERC2, possibly via HERC2 interaction with NEURL4. The cofactor is Mg(2+). Phosphorylated at Ser-189 by PAK1, PAK2 and PAK3 resulting in catalytic activation. Phosphorylated by MAPKAPK5 at other sites. In terms of processing, ubiquitination at Met-1 leads to degradation by the proteasome pathway. Highest levels within the nervous system, expressed in different tissues, mostly in skeletal muscle.

It is found in the cytoplasm. Its subcellular location is the nucleus. The catalysed reaction is L-seryl-[protein] + ATP = O-phospho-L-seryl-[protein] + ADP + H(+). The enzyme catalyses L-threonyl-[protein] + ATP = O-phospho-L-threonyl-[protein] + ADP + H(+). With respect to regulation, activated by phosphorylation at Ser-189. Functionally, atypical MAPK protein. Phosphorylates microtubule-associated protein 2 (MAP2) and MAPKAPK5. The precise role of the complex formed with MAPKAPK5 is still unclear, but the complex follows a complex set of phosphorylation events: upon interaction with atypical MAPKAPK5, ERK3/MAPK6 is phosphorylated at Ser-189 and then mediates phosphorylation and activation of MAPKAPK5, which in turn phosphorylates ERK3/MAPK6. May promote entry in the cell cycle. In Rattus norvegicus (Rat), this protein is Mitogen-activated protein kinase 6 (Mapk6).